A 296-amino-acid chain; its full sequence is Nucleotide-binding protein SPCG_1551 (296 aa).

Position 13–20 (G13–T20) interacts with ATP. D63 to S66 provides a ligand contact to GTP.

This sequence belongs to the RapZ-like family.

Displays ATPase and GTPase activities. This chain is Nucleotide-binding protein SPCG_1551, found in Streptococcus pneumoniae (strain CGSP14).